Reading from the N-terminus, the 347-residue chain is ATPase GET3 (347 aa).

Position 26–33 (26–33 (KGGVGKTT)) interacts with ATP. The active site involves D57. The ATP site is built by E241 and N268. Zn(2+) contacts are provided by C279 and C282.

This sequence belongs to the arsA ATPase family. Homodimer. Component of the Golgi to ER traffic (GET) complex, which is composed of GET1, GET2 and GET3. Within the complex, GET1 and GET2 form a heterotetramer which is stabilized by phosphatidylinositol binding and which binds to the GET3 homodimer. Interacts with the chloride channel protein GEF1.

Its subcellular location is the cytoplasm. It localises to the endoplasmic reticulum. The protein localises to the golgi apparatus. In terms of biological role, ATPase required for the post-translational delivery of tail-anchored (TA) proteins to the endoplasmic reticulum. Recognizes and selectively binds the transmembrane domain of TA proteins in the cytosol. This complex then targets to the endoplasmic reticulum by membrane-bound receptors GET1 and GET2, where the tail-anchored protein is released for insertion. This process is regulated by ATP binding and hydrolysis. ATP binding drives the homodimer towards the closed dimer state, facilitating recognition of newly synthesized TA membrane proteins. ATP hydrolysis is required for insertion. Subsequently, the homodimer reverts towards the open dimer state, lowering its affinity for the GET1-GET2 receptor, and returning it to the cytosol to initiate a new round of targeting. Cooperates with the HDEL receptor ERD2 to mediate the ATP-dependent retrieval of resident ER proteins that contain a C-terminal H-D-E-L retention signal from the Golgi to the ER. Involved in low-level resistance to the oxyanions arsenite and arsenate, and in heat tolerance. This is ATPase GET3 from Meyerozyma guilliermondii (strain ATCC 6260 / CBS 566 / DSM 6381 / JCM 1539 / NBRC 10279 / NRRL Y-324) (Yeast).